We begin with the raw amino-acid sequence, 385 residues long: Succinate--CoA ligase [ADP-forming] subunit beta (385 aa).

The 235-residue stretch at 9 to 243 folds into the ATP-grasp domain; that stretch reads KEILSAYGIP…YSQLDTLEIN (235 aa). ATP-binding positions include lysine 45, 52–54, glutamate 98, valine 101, and glutamate 106; that span reads GRG. 2 residues coordinate Mg(2+): asparagine 198 and aspartate 212. Substrate-binding positions include asparagine 263 and 320 to 322; that span reads GIM.

It belongs to the succinate/malate CoA ligase beta subunit family. In terms of assembly, heterotetramer of two alpha and two beta subunits. Mg(2+) serves as cofactor.

The catalysed reaction is succinate + ATP + CoA = succinyl-CoA + ADP + phosphate. It carries out the reaction GTP + succinate + CoA = succinyl-CoA + GDP + phosphate. Its pathway is carbohydrate metabolism; tricarboxylic acid cycle; succinate from succinyl-CoA (ligase route): step 1/1. In terms of biological role, succinyl-CoA synthetase functions in the citric acid cycle (TCA), coupling the hydrolysis of succinyl-CoA to the synthesis of either ATP or GTP and thus represents the only step of substrate-level phosphorylation in the TCA. The beta subunit provides nucleotide specificity of the enzyme and binds the substrate succinate, while the binding sites for coenzyme A and phosphate are found in the alpha subunit. The protein is Succinate--CoA ligase [ADP-forming] subunit beta of Geobacter sulfurreducens (strain ATCC 51573 / DSM 12127 / PCA).